Reading from the N-terminus, the 195-residue chain is Interferon tau-11 (195 aa).

Positions 1–23 (MAFVLSLLMALVLVSYGPGGSLG) are cleaved as a signal peptide. Intrachain disulfides connect C24–C122 and C52–C162. N101 carries N-linked (GlcNAc...) asparagine glycosylation.

It belongs to the alpha/beta interferon family. IFN-alphaII subfamily. In terms of tissue distribution, constitutively and exclusively expressed in the mononuclear cells of the extraembryonic trophectoderm.

It localises to the secreted. Its function is as follows. Paracrine hormone primarily responsible for maternal recognition of pregnancy. Interacts with endometrial receptors, probably type I interferon receptors, and blocks estrogen receptor expression, preventing the estrogen-induced increase in oxytocin receptor expression in the endometrium. This results in the suppression of the pulsatile endometrial release of the luteolytic hormone prostaglandin F2-alpha, hindering the regression of the corpus luteum (luteolysis) and therefore a return to ovarian cyclicity. This, and a possible direct effect of IFN-tau on prostaglandin synthesis, leads in turn to continued ovarian progesterone secretion, which stimulates the secretion by the endometrium of the nutrients required for the growth of the conceptus. In summary, displays particularly high antiviral and antiproliferative potency concurrently with particular weak cytotoxicity, high antiluteolytic activity and immunomodulatory properties. In contrast with other IFNs, IFN-tau is not virally inducible. The sequence is that of Interferon tau-11 (IFNT11) from Ovis aries (Sheep).